A 1228-amino-acid chain; its full sequence is Structural maintenance of chromosomes protein 1 (1228 aa).

32-39 contributes to the ATP binding site; the sequence is GPNGAGKS. Residues 197 to 510 are a coiled coil; it reads NKKRGINAEL…ESKQDAKKRE (314 aa). The SMC hinge domain occupies 522–635; it reads VKGRIIDLCT…CDSMTVARDL (114 aa). Coiled coils occupy residues 710–783, 814–926, and 984–1068; these read KLHS…KIFS, EFTK…EIDR, and VEVD…KRLQ.

Belongs to the SMC family. SMC1 subfamily. As to quaternary structure, cohesin complexes are composed of the psm1/smc1 and psm3/smc3 heterodimer attached via their SMC hinge domain, rad21/scc1 which link them, and psc3/scc3, which interacts with rad21.

The protein localises to the nucleus. The protein resides in the chromosome. Its function is as follows. Involved in chromosome cohesion during cell cycle and in DNA repair. Central component of cohesin complex. The cohesin complex is required for the cohesion of sister chromatids after DNA replication. The cohesin complex apparently forms a large proteinaceous ring within which sister chromatids can be trapped. At anaphase, the complex is cleaved and dissociates from chromatin, allowing sister chromatids to segregate. This is Structural maintenance of chromosomes protein 1 (psm1) from Schizosaccharomyces pombe (strain 972 / ATCC 24843) (Fission yeast).